We begin with the raw amino-acid sequence, 203 residues long: NAD(P)H dehydrogenase (quinone) (203 aa).

Residues 3-194 (VLIPFYSMYG…AGARYQGKYI (192 aa)) form the Flavodoxin-like domain. FMN contacts are provided by residues 9 to 14 (SMYGHI) and 82 to 84 (TRF). Tyr-11 contributes to the NAD(+) binding site. Trp-102 provides a ligand contact to substrate. FMN contacts are provided by residues 117–123 (SSATQHG) and His-138.

It belongs to the WrbA family. Requires FMN as cofactor.

The catalysed reaction is a quinone + NADH + H(+) = a quinol + NAD(+). It carries out the reaction a quinone + NADPH + H(+) = a quinol + NADP(+). The sequence is that of NAD(P)H dehydrogenase (quinone) from Geobacter metallireducens (strain ATCC 53774 / DSM 7210 / GS-15).